The primary structure comprises 173 residues: Photosystem I assembly protein Ycf3 (173 aa).

3 TPR repeats span residues 35-68 (AFAY…EEDP), 72-105 (AFIL…NAKM), and 120-153 (GSIA…APNN).

The protein belongs to the Ycf3 family.

Its subcellular location is the cellular thylakoid membrane. Functionally, essential for the assembly of the photosystem I (PSI) complex. May act as a chaperone-like factor to guide the assembly of the PSI subunits. The protein is Photosystem I assembly protein Ycf3 of Synechococcus sp. (strain RCC307).